Here is a 1081-residue protein sequence, read N- to C-terminus: Mediator of RNA polymerase II transcription subunit 15 (1081 aa).

S2 is subject to N-acetylserine. The interaction with GCN4 stretch occupies residues 25 to 49 (LQVLMDINTLNGGSSDTADKIRIHA). The disordered stretch occupies residues 238–286 (QAQAQANNNNNGLPQNGNINNNINIPQQQQMQPPNSSANNNPLQQQSSQ). S335 is subject to Phosphoserine. Tandem repeats lie at residues 422–423 (QA), 424–425 (QA), 426–427 (QA), 428–429 (QA), 430–431 (QA), 432–433 (QA), 434–435 (QA), 436–437 (QA), 438–439 (QA), 440–441 (QA), and 442–443 (QA). The segment at 422-481 (QAQAQAQAQAQAQAQAQAQAQAAQAAQAQAQAQAQAQAQAQAQAQAQAQAQAQAQAQAQA) is 30 X 2 AA approximate tandem repeats of Q-A. Residues 444–445 (AQ) form a 12; approximate repeat. Residues 446–447 (AA) form a 13; approximate repeat. 17 tandem repeats follow at residues 448–449 (QA), 450–451 (QA), 452–453 (QA), 454–455 (QA), 456–457 (QA), 458–459 (QA), 460–461 (QA), 462–463 (QA), 464–465 (QA), 466–467 (QA), 468–469 (QA), 470–471 (QA), 472–473 (QA), 474–475 (QA), 476–477 (QA), 478–479 (QA), and 480–481 (QA). The segment covering 476–497 (QAQAQAHAQHQPSQQPQQAQQQ) has biased composition (low complexity). Disordered regions lie at residues 476–505 (QAQA…HGLT) and 692–712 (QQQQ…YSAM). Residues S736, S752, S783, S785, and S789 each carry the phosphoserine modification. Positions 744–836 (PVSAAATPSL…KTVQSPMGAQ (93 aa)) are disordered. The segment covering 749–836 (ATPSLNKTIN…KTVQSPMGAQ (88 aa)) has biased composition (polar residues). A Phosphothreonine modification is found at T793. A phosphoserine mark is found at S831, S1003, S1008, S1018, and S1034. Residues 1026–1055 (DSKKIKVDSPDDPFMTKSGATTSEKQEVTN) are disordered.

It belongs to the Mediator complex subunit 15 family. Component of the Mediator complex, which is composed of at least 21 subunits that form three structurally distinct submodules. The Mediator head module contains MED6, MED8, MED11, SRB4/MED17, SRB5/MED18, ROX3/MED19, SRB2/MED20 and SRB6/MED22, the middle module contains MED1, MED4, NUT1/MED5, MED7, CSE2/MED9, NUT2/MED10, SRB7/MED21 and SOH1/MED31, and the tail module contains MED2, PGD1/MED3, RGR1/MED14, GAL11/MED15 and SIN4/MED16. The head and the middle modules interact directly with RNA polymerase II, whereas the elongated tail module interacts with gene-specific regulatory proteins. GAL11/MED15 interacts with the activator GAL4; the interaction is direct. GAL11/MED15 interacts (via multiple regions) with the activator GCN4; the interaction is direct.

It is found in the nucleus. Functionally, component of the Mediator complex, a coactivator involved in the regulated transcription of nearly all RNA polymerase II-dependent genes. Mediator functions as a bridge to convey information from gene-specific regulatory proteins to the basal RNA polymerase II transcription machinery. The Mediator complex, having a compact conformation in its free form, is recruited to promoters by direct interactions with regulatory proteins and serves for the assembly of a functional pre-initiation complex with RNA polymerase II and the general transcription factors. The Mediator complex unfolds to an extended conformation and partially surrounds RNA polymerase II, specifically interacting with the unphosphorylated form of the C-terminal domain (CTD) of RNA polymerase II. The Mediator complex dissociates from the RNA polymerase II holoenzyme and stays at the promoter when transcriptional elongation begins. It has an important role in the negative regulation of Ty transcription. In Saccharomyces cerevisiae (strain ATCC 204508 / S288c) (Baker's yeast), this protein is Mediator of RNA polymerase II transcription subunit 15.